A 384-amino-acid chain; its full sequence is MNRNKREKEYYSIDVGDSTFTVLKRYQNLRPIGSGAQGIVCSAYDHVLDRNVAIKKLSRPFQNQTHAKRAYRELVLMKCVNHKNIIGLLNVFTPQKTLEEFQDVYLVMELMDANLCQVIQMELDHERLSYLLYQMLCGIKHLHAAGIIHRDLKPSNIVVKSDCTLKILDFGLARTAATGLLMTPYVVTRYYRAPEVILGMGYQANVDVWSIGCIMAEMVRGSVLFPGTDHIDQWNKVIEQLGTPSQEFMMKLNQSVRTYVENRPRYAGYSFEKLFPDVLFPADSDHNKLKASQARDLLSKMLVIDASKRISVDEALQHPYINVWYDPSEVEAPPPAITDKQLDEREHSVEEWKELIYKEVLEWEERTKNGVIRGQPASLAQVQQ.

Residues tyrosine 26–isoleucine 321 form the Protein kinase domain. ATP is bound by residues glycine 33–glycine 38 and lysine 55. The active-site Proton acceptor is the aspartate 151. Threonine 183 carries the phosphothreonine modification. The short motif at threonine 183–tyrosine 185 is the TXY element. Phosphotyrosine is present on tyrosine 185.

It belongs to the protein kinase superfamily. CMGC Ser/Thr protein kinase family. MAP kinase subfamily. Mg(2+) serves as cofactor. Post-translationally, dually phosphorylated on Thr-183 and Tyr-185, which activates the enzyme.

The protein localises to the cytoplasm. It localises to the nucleus. Its subcellular location is the synapse. It carries out the reaction L-seryl-[protein] + ATP = O-phospho-L-seryl-[protein] + ADP + H(+). The enzyme catalyses L-threonyl-[protein] + ATP = O-phospho-L-threonyl-[protein] + ADP + H(+). With respect to regulation, activated by threonine and tyrosine phosphorylation. Responds to activation by environmental stress and pro-inflammatory cytokines by phosphorylating a number of transcription factors, primarily components of AP-1 such as c-Jun and ATF2 and thus regulates AP-1 transcriptional activity. May play a role in the regulation of the circadian clock. In Danio rerio (Zebrafish), this protein is Mitogen-activated protein kinase 8 (mapk8).